Reading from the N-terminus, the 396-residue chain is tRNA-specific 2-thiouridylase MnmA (396 aa).

Residues 35–42 (GLSGGVDS) and Leu61 contribute to the ATP site. Catalysis depends on Cys122, which acts as the Nucleophile. Cys122 and Cys221 are oxidised to a cystine. Position 147 (Gly147) interacts with ATP. The tract at residues 171 to 173 (KDQ) is interaction with tRNA. Cys221 (cysteine persulfide intermediate) is an active-site residue. Positions 326–327 (RY) are interaction with tRNA.

Belongs to the MnmA/TRMU family.

Its subcellular location is the cytoplasm. The catalysed reaction is S-sulfanyl-L-cysteinyl-[protein] + uridine(34) in tRNA + AH2 + ATP = 2-thiouridine(34) in tRNA + L-cysteinyl-[protein] + A + AMP + diphosphate + H(+). In terms of biological role, catalyzes the 2-thiolation of uridine at the wobble position (U34) of tRNA, leading to the formation of s(2)U34. In Parasynechococcus marenigrum (strain WH8102), this protein is tRNA-specific 2-thiouridylase MnmA.